We begin with the raw amino-acid sequence, 331 residues long: UPF0194 membrane protein YbhG (331 aa).

The N-terminal stretch at 1 to 19 is a signal peptide; sequence MKKPVVIGLAIAAIVTVIA. Residues 107 to 208 are a coiled coil; the sequence is EEIAQAAAAV…LDLQDTTLIA (102 aa).

This sequence belongs to the UPF0194 family.

The protein resides in the periplasm. The polypeptide is UPF0194 membrane protein YbhG (Salmonella arizonae (strain ATCC BAA-731 / CDC346-86 / RSK2980)).